The chain runs to 543 residues: Alanine aminotransferase 1, mitochondrial (543 aa).

The transit peptide at 1 to 55 (MRRFVIGQAKNLIDQSRRRQLHHHKNLSFVSLIPPFSAPSDSSSRHLSSSSSSDM) directs the protein to the mitochondrion. The segment covering 43-63 (SSRHLSSSSSSDMSASDSSSS) has biased composition (low complexity). A disordered region spans residues 43 to 64 (SSRHLSSSSSSDMSASDSSSSL). Ser56 is modified (N-acetylserine). Residues Tyr173, 209-210 (AS), Tyr235, Asn291, Tyr322, and 354-356 (SFQ) each bind pyridoxal 5'-phosphate. At Lys360 the chain carries N6-(pyridoxal phosphate)lysine. Pyridoxal 5'-phosphate-binding residues include Arg369 and Asn397.

It belongs to the class-I pyridoxal-phosphate-dependent aminotransferase family. Alanine aminotransferase subfamily. In terms of assembly, homodimer. The cofactor is pyridoxal 5'-phosphate. In terms of processing, the N-terminus is blocked. In terms of tissue distribution, mostly expressed in roots and shoots, mostly in vascular tissues, and, to a lower extent, in flowers and leaves.

It is found in the mitochondrion. The catalysed reaction is L-alanine + 2-oxoglutarate = pyruvate + L-glutamate. It participates in photosynthesis; C4 acid pathway. Its pathway is amino-acid degradation; L-alanine degradation via transaminase pathway; pyruvate from L-alanine: step 1/1. In terms of biological role, is the major alanine aminotransferase in roots that catalyzes the conversion of alanine to pyruvate. Involved in the rapid conversion of alanine to pyruvate during recovery from low-oxygen stress. The sequence is that of Alanine aminotransferase 1, mitochondrial from Arabidopsis thaliana (Mouse-ear cress).